Consider the following 640-residue polypeptide: UvrABC system protein C (640 aa).

One can recognise a GIY-YIG domain in the interval 22–101 (NDPGCYLMKD…IKSHQPYFNV (80 aa)). The UVR domain occupies 211-246 (DELRILLEKQMISFSESLKFEEAGSVRDQLKGIDRL).

This sequence belongs to the UvrC family. In terms of assembly, interacts with UvrB in an incision complex.

Its subcellular location is the cytoplasm. The UvrABC repair system catalyzes the recognition and processing of DNA lesions. UvrC both incises the 5' and 3' sides of the lesion. The N-terminal half is responsible for the 3' incision and the C-terminal half is responsible for the 5' incision. This Prochlorococcus marinus (strain NATL1A) protein is UvrABC system protein C.